Here is a 738-residue protein sequence, read N- to C-terminus: Ethylene receptor (738 aa).

3 consecutive transmembrane segments (helical) span residues 22–42 (ISDF…VYFV), 53–73 (VLVQ…INLW), and 91–111 (VLTA…IPDL). The Cu cation site is built by Cys-64 and His-68. Residues 157–305 (DRHTILKTTL…VVADQVAVAL (149 aa)) form the GAF domain. Residues 348–585 (VMNHEMRTPM…TAIFIVKLGI (238 aa)) form the Histidine kinase domain. His-351 is subject to Phosphohistidine; by autocatalysis. The region spanning 613-730 (KVLIMDDNGF…KMRSVLSELL (118 aa)) is the Response regulatory domain. The residue at position 661 (Asp-661) is a 4-aspartylphosphate.

The protein belongs to the ethylene receptor family. Homodimer; disulfide-linked. Cu cation is required as a cofactor. Post-translationally, activation probably requires a transfer of a phosphate group between a His in the transmitter domain and an Asp of the receiver domain.

Its subcellular location is the endoplasmic reticulum membrane. The catalysed reaction is ATP + protein L-histidine = ADP + protein N-phospho-L-histidine.. In terms of biological role, may act early in the ethylene signal transduction pathway, possibly as an ethylene receptor, or as a regulator of the pathway. This chain is Ethylene receptor (ETR1), found in Nicotiana tabacum (Common tobacco).